We begin with the raw amino-acid sequence, 250 residues long: Protein BTG4 (250 aa).

The protein belongs to the BTG family. As to quaternary structure, interacts with CNOT7 and EIF4E. Interacts with CNOT8. In terms of tissue distribution, expressed in oocytes. Expressed in testis and in olfactory epithelium.

Its function is as follows. Adapter protein that bridges CNOT7, a catalytic subunit of the CCR4-NOT complex, to EIF4E, and facilitates maternal mRNAs decay during the maturation of oocytes and in the fertilized egg. It is therefore required for the maternal-zygotic transition (MZT), zygotic cleavage and initiation of embryonic development. The polypeptide is Protein BTG4 (Btg4) (Mus musculus (Mouse)).